The primary structure comprises 107 residues: Ferredoxin Fdx8 (107 aa).

4Fe-4S ferredoxin-type domains are found at residues 1–31 (MAYV…GPLA) and 50–79 (LQLY…DEDE). The [4Fe-4S] cluster site is built by Cys9, Cys13, Cys17, Cys21, Cys59, Cys62, Cys65, and Cys69.

[4Fe-4S] cluster serves as cofactor.

Its function is as follows. Ferredoxins are iron-sulfur proteins that transfer electrons in a wide variety of metabolic reactions. Fdx2 can receive electrons from both FdR_A and FdR_B ferredoxin reductases, with a preference for FdR_B compared with FdR_A, and transfer the electrons to the cytochrome P450 CYP260A1. In Sorangium cellulosum (strain So ce56) (Polyangium cellulosum (strain So ce56)), this protein is Ferredoxin Fdx8.